We begin with the raw amino-acid sequence, 166 residues long: MHKLAHTSFGIVGMFVNTCIVAKYVIINWEMFSMKKVNNDTVFGILQLETLLGDINSIFSEIESEYKMSREEILILLTLWQKGFMTLKEMDRFVEVKPYKRTRTYNNLVELEWIYKERPVDDERTVIIHFNEKLQQEKVELLNFISDAIASRATAMQNSLNAIIAV.

A DNA-binding region (H-T-H motif) is located at residues 87-110; sequence LKEMDRFVEVKPYKRTRTYNNLVE.

The protein belongs to the rot family.

Functionally, global regulator with both positive and negative effects that mediates modulation of several genes involved in virulence. Also, modulates the expression of genes not previously implicated in pathogenesis. This is HTH-type transcriptional regulator rot (rot) from Staphylococcus aureus (strain COL).